A 311-amino-acid polypeptide reads, in one-letter code: Pyrimidine-specific ribonucleoside hydrolase RihA (311 aa).

His-240 is an active-site residue.

This sequence belongs to the IUNH family. RihA subfamily.

Functionally, hydrolyzes with equal efficiency cytidine or uridine to ribose and cytosine or uracil, respectively. This is Pyrimidine-specific ribonucleoside hydrolase RihA from Escherichia coli O8 (strain IAI1).